Reading from the N-terminus, the 367-residue chain is Pantothenate kinase CAB1 (367 aa).

Belongs to the type II pantothenate kinase family.

The protein localises to the cytoplasm. Its subcellular location is the nucleus. It carries out the reaction (R)-pantothenate + ATP = (R)-4'-phosphopantothenate + ADP + H(+). It participates in cofactor biosynthesis; coenzyme A biosynthesis; CoA from (R)-pantothenate: step 1/5. Its activity is regulated as follows. Regulated by feedback inhibition by malonyl-CoA. In terms of biological role, plays a role in the physiological regulation of the intracellular CoA concentration. This is Pantothenate kinase CAB1 (CAB1) from Saccharomyces cerevisiae (strain ATCC 204508 / S288c) (Baker's yeast).